Reading from the N-terminus, the 293-residue chain is ATP synthase gamma chain (293 aa).

It belongs to the ATPase gamma chain family. In terms of assembly, F-type ATPases have 2 components, CF(1) - the catalytic core - and CF(0) - the membrane proton channel. CF(1) has five subunits: alpha(3), beta(3), gamma(1), delta(1), epsilon(1). CF(0) has three main subunits: a, b and c.

The protein localises to the cell inner membrane. Functionally, produces ATP from ADP in the presence of a proton gradient across the membrane. The gamma chain is believed to be important in regulating ATPase activity and the flow of protons through the CF(0) complex. This Leptothrix cholodnii (strain ATCC 51168 / LMG 8142 / SP-6) (Leptothrix discophora (strain SP-6)) protein is ATP synthase gamma chain.